A 296-amino-acid chain; its full sequence is N-acetylmuramic acid 6-phosphate etherase 2 (296 aa).

Residues 55 to 218 (IIKSFNQGGR…STISMIGIGK (164 aa)) enclose the SIS domain. The active-site Proton donor is E83. E114 is an active-site residue.

It belongs to the GCKR-like family. MurNAc-6-P etherase subfamily. In terms of assembly, homodimer.

The catalysed reaction is N-acetyl-D-muramate 6-phosphate + H2O = N-acetyl-D-glucosamine 6-phosphate + (R)-lactate. It functions in the pathway amino-sugar metabolism; N-acetylmuramate degradation. Functionally, specifically catalyzes the cleavage of the D-lactyl ether substituent of MurNAc 6-phosphate, producing GlcNAc 6-phosphate and D-lactate. The protein is N-acetylmuramic acid 6-phosphate etherase 2 of Enterococcus faecalis (strain ATCC 700802 / V583).